Reading from the N-terminus, the 448-residue chain is Exodeoxyribonuclease 7 large subunit (448 aa).

It belongs to the XseA family. As to quaternary structure, heterooligomer composed of large and small subunits.

It localises to the cytoplasm. The enzyme catalyses Exonucleolytic cleavage in either 5'- to 3'- or 3'- to 5'-direction to yield nucleoside 5'-phosphates.. Bidirectionally degrades single-stranded DNA into large acid-insoluble oligonucleotides, which are then degraded further into small acid-soluble oligonucleotides. This chain is Exodeoxyribonuclease 7 large subunit, found in Shewanella sp. (strain MR-7).